A 157-amino-acid chain; its full sequence is Probable intracellular pathogenesis-related protein T1 (157 aa).

Residues Asn-79 and Asn-117 are each glycosylated (N-linked (GlcNAc...) asparagine).

The protein belongs to the BetVI family.

This is Probable intracellular pathogenesis-related protein T1 (PCKR3) from Catharanthus roseus (Madagascar periwinkle).